The sequence spans 358 residues: Probable protein phosphatase 2C 34 (358 aa).

A PPM-type phosphatase domain is found at 62–349 (LASVFSRRGE…DDISAVCLFF (288 aa)). Mn(2+)-binding residues include D98, G99, D294, and D340.

Belongs to the PP2C family. The cofactor is Mg(2+). Mn(2+) serves as cofactor.

The enzyme catalyses O-phospho-L-seryl-[protein] + H2O = L-seryl-[protein] + phosphate. It catalyses the reaction O-phospho-L-threonyl-[protein] + H2O = L-threonyl-[protein] + phosphate. This Arabidopsis thaliana (Mouse-ear cress) protein is Probable protein phosphatase 2C 34.